Here is a 179-residue protein sequence, read N- to C-terminus: Orotate phosphoribosyltransferase (179 aa).

5-phospho-alpha-D-ribose 1-diphosphate contacts are provided by residues R24, R89, K90, K93, and 115–123 (EDVITTGGA). 2 residues coordinate orotate: T119 and R147.

This sequence belongs to the purine/pyrimidine phosphoribosyltransferase family. PyrE subfamily. In terms of assembly, homodimer. It depends on Mg(2+) as a cofactor.

The enzyme catalyses orotidine 5'-phosphate + diphosphate = orotate + 5-phospho-alpha-D-ribose 1-diphosphate. Its pathway is pyrimidine metabolism; UMP biosynthesis via de novo pathway; UMP from orotate: step 1/2. Catalyzes the transfer of a ribosyl phosphate group from 5-phosphoribose 1-diphosphate to orotate, leading to the formation of orotidine monophosphate (OMP). The polypeptide is Orotate phosphoribosyltransferase (Nocardioides sp. (strain ATCC BAA-499 / JS614)).